Consider the following 261-residue polypeptide: Cytochrome c oxidase subunit 3 (261 aa).

The Mitochondrial matrix portion of the chain corresponds to 1–15; that stretch reads MSHQAHAYHMVDPSP. A helical transmembrane segment spans residues 16–34; it reads WPLTGAGAALLMTSGLAMW. At 35 to 40 the chain is on the mitochondrial intermembrane side; it reads FHKNSC. Residues 41 to 66 form a helical membrane-spanning segment; the sequence is ILMTLGLILMLLTMYQWWRDIVREGT. Residues 67–72 lie on the Mitochondrial matrix side of the membrane; it reads FLGHHT. Residues 73-105 traverse the membrane as a helical segment; sequence SPVQQGLRYGMILFIISEVCFFAGFFWAFYHAS. Topologically, residues 106–128 are mitochondrial intermembrane; the sequence is LAPTPELGLTWPPTGINPLNPFE. Residues 129-152 traverse the membrane as a helical segment; it reads VPLLNTAVLLASGVSVTWAHHSIT. The Mitochondrial matrix portion of the chain corresponds to 153 to 155; that stretch reads EKN. A helical membrane pass occupies residues 156-183; it reads RTETTQALTLTVLLGLYFTALQIMEYYE. Over 184–190 the chain is Mitochondrial intermembrane; sequence TPFTMAD. Residues 191–223 form a helical membrane-spanning segment; the sequence is GVYGSTFFVATGFHGLHVIIGSLFLLTCLLRHL. Over 224–232 the chain is Mitochondrial matrix; it reads QYHFTSKHH. A helical membrane pass occupies residues 233–256; sequence FGFEAAAWYWHFVDVVWLFLYISI. The Mitochondrial intermembrane segment spans residues 257–261; it reads YWWGS.

Belongs to the cytochrome c oxidase subunit 3 family. As to quaternary structure, component of the cytochrome c oxidase (complex IV, CIV), a multisubunit enzyme composed of 14 subunits. The complex is composed of a catalytic core of 3 subunits MT-CO1, MT-CO2 and MT-CO3, encoded in the mitochondrial DNA, and 11 supernumerary subunits COX4I, COX5A, COX5B, COX6A, COX6B, COX6C, COX7A, COX7B, COX7C, COX8 and NDUFA4, which are encoded in the nuclear genome. The complex exists as a monomer or a dimer and forms supercomplexes (SCs) in the inner mitochondrial membrane with NADH-ubiquinone oxidoreductase (complex I, CI) and ubiquinol-cytochrome c oxidoreductase (cytochrome b-c1 complex, complex III, CIII), resulting in different assemblies (supercomplex SCI(1)III(2)IV(1) and megacomplex MCI(2)III(2)IV(2)).

It is found in the mitochondrion inner membrane. It catalyses the reaction 4 Fe(II)-[cytochrome c] + O2 + 8 H(+)(in) = 4 Fe(III)-[cytochrome c] + 2 H2O + 4 H(+)(out). In terms of biological role, component of the cytochrome c oxidase, the last enzyme in the mitochondrial electron transport chain which drives oxidative phosphorylation. The respiratory chain contains 3 multisubunit complexes succinate dehydrogenase (complex II, CII), ubiquinol-cytochrome c oxidoreductase (cytochrome b-c1 complex, complex III, CIII) and cytochrome c oxidase (complex IV, CIV), that cooperate to transfer electrons derived from NADH and succinate to molecular oxygen, creating an electrochemical gradient over the inner membrane that drives transmembrane transport and the ATP synthase. Cytochrome c oxidase is the component of the respiratory chain that catalyzes the reduction of oxygen to water. Electrons originating from reduced cytochrome c in the intermembrane space (IMS) are transferred via the dinuclear copper A center (CU(A)) of subunit 2 and heme A of subunit 1 to the active site in subunit 1, a binuclear center (BNC) formed by heme A3 and copper B (CU(B)). The BNC reduces molecular oxygen to 2 water molecules using 4 electrons from cytochrome c in the IMS and 4 protons from the mitochondrial matrix. The sequence is that of Cytochrome c oxidase subunit 3 (MT-CO3) from Petromyzon marinus (Sea lamprey).